We begin with the raw amino-acid sequence, 169 residues long: Nascent polypeptide-associated complex subunit alpha (169 aa).

The NAC-A/B domain occupies 14–78; the sequence is NKNEKKAREM…AKIDNFSQKL (65 aa). The tract at residues 85–128 is disordered; it reads IQSVSKSPEEIQKDMQLAADQAGDESAKPAAAAEEDDEAPVDAG. Positions 130–169 constitute a UBA domain; sequence LSAEDIELVASQANVSKNKAIKALKEHNGDIVNAIMALSK.

Belongs to the NAC-alpha family. Part of the nascent polypeptide-associated complex (NAC), consisting of EGD2 and EGD1. NAC associates with ribosomes via EGD1.

Its subcellular location is the cytoplasm. The protein localises to the nucleus. Functionally, component of the nascent polypeptide-associated complex (NAC), a dynamic component of the ribosomal exit tunnel, protecting the emerging polypeptides from interaction with other cytoplasmic proteins to ensure appropriate nascent protein targeting. The NAC complex also promotes mitochondrial protein import by enhancing productive ribosome interactions with the outer mitochondrial membrane and blocks the inappropriate interaction of ribosomes translating non-secretory nascent polypeptides with translocation sites in the membrane of the endoplasmic reticulum. EGD2 may also be involved in transcription regulation. In Vanderwaltozyma polyspora (strain ATCC 22028 / DSM 70294 / BCRC 21397 / CBS 2163 / NBRC 10782 / NRRL Y-8283 / UCD 57-17) (Kluyveromyces polysporus), this protein is Nascent polypeptide-associated complex subunit alpha (EGD2).